Here is a 402-residue protein sequence, read N- to C-terminus: Phosphoglycerate kinase (402 aa).

Residues 24–26, Arg40, 63–66, Arg122, and Arg155 contribute to the substrate site; these read DFN and HFGR. ATP-binding positions include Lys206, Gly297, Glu328, and 358 to 361; that span reads GGDS.

This sequence belongs to the phosphoglycerate kinase family. In terms of assembly, monomer.

It localises to the cytoplasm. The enzyme catalyses (2R)-3-phosphoglycerate + ATP = (2R)-3-phospho-glyceroyl phosphate + ADP. It participates in carbohydrate degradation; glycolysis; pyruvate from D-glyceraldehyde 3-phosphate: step 2/5. In Prochlorococcus marinus (strain AS9601), this protein is Phosphoglycerate kinase.